The following is a 565-amino-acid chain: Proline--tRNA ligase (565 aa).

Belongs to the class-II aminoacyl-tRNA synthetase family. ProS type 1 subfamily. As to quaternary structure, homodimer.

Its subcellular location is the cytoplasm. The enzyme catalyses tRNA(Pro) + L-proline + ATP = L-prolyl-tRNA(Pro) + AMP + diphosphate. Catalyzes the attachment of proline to tRNA(Pro) in a two-step reaction: proline is first activated by ATP to form Pro-AMP and then transferred to the acceptor end of tRNA(Pro). As ProRS can inadvertently accommodate and process non-cognate amino acids such as alanine and cysteine, to avoid such errors it has two additional distinct editing activities against alanine. One activity is designated as 'pretransfer' editing and involves the tRNA(Pro)-independent hydrolysis of activated Ala-AMP. The other activity is designated 'posttransfer' editing and involves deacylation of mischarged Ala-tRNA(Pro). The misacylated Cys-tRNA(Pro) is not edited by ProRS. The polypeptide is Proline--tRNA ligase (Campylobacter lari (strain RM2100 / D67 / ATCC BAA-1060)).